A 422-amino-acid chain; its full sequence is Putative acid phosphatase 5 (422 aa).

Positions 1–13 (MLLLLVLLIGASG) are cleaved as a signal peptide. The Nucleophile role is filled by H40. Residues N104, N210, and N218 are each glycosylated (N-linked (GlcNAc...) asparagine). Cystine bridges form between C152-C363, C205-C302, and C338-C342. The active-site Proton donor is D279. Residues N312 and N323 are each glycosylated (N-linked (GlcNAc...) asparagine).

Belongs to the histidine acid phosphatase family.

The catalysed reaction is a phosphate monoester + H2O = an alcohol + phosphate. This Caenorhabditis elegans protein is Putative acid phosphatase 5 (pho-5).